The primary structure comprises 492 residues: Fibroblast growth factor receptor substrate 3 (492 aa).

Gly-2 is lipidated: N-myristoyl glycine. One can recognise an IRS-type PTB domain in the interval 13-115 (VPHNHPTKFK…QCNSINVTEE (103 aa)). 3 disordered regions span residues 125–205 (PQEL…EDRR), 337–413 (QQLR…EPPR), and 425–492 (WGTA…DLPL). Composition is skewed to polar residues over residues 133-147 (GSSQ…SFSN) and 166-185 (PSTS…QTLI). Low complexity predominate over residues 374-385 (TSTRASARSHSS).

In terms of assembly, binds NTRK1, FGFR1, NGFR, GRB2, PTPN11 and ERK2. Post-translationally, phosphorylated on tyrosine residues upon stimulation by BFGF or NGFB.

It localises to the membrane. Adapter protein that links FGF and NGF receptors to downstream signaling pathways. Involved in the activation of MAP kinases. Down-regulates ERK2 signaling by interfering with the phosphorylation and nuclear translocation of ERK2. The polypeptide is Fibroblast growth factor receptor substrate 3 (Frs3) (Rattus norvegicus (Rat)).